The following is a 371-amino-acid chain: Aromatic peroxygenase (371 aa).

Residues 1 to 18 form the signal peptide; it reads MKYFPLFPTLVFAARVVA. The propeptide occupies 19–43; it reads FPAYASLAGLSQQELDAIIPTLEAR. Asparagine 54 carries N-linked (GlcNAc...) asparagine glycosylation. Heme is bound at residue cysteine 79. N-linked (GlcNAc...) asparagine glycosylation is found at asparagine 184, asparagine 204, asparagine 225, and asparagine 329. Cysteine 321 and cysteine 362 are oxidised to a cystine.

This sequence belongs to the chloroperoxidase family. Requires heme b as cofactor. N-glycosylated.

It carries out the reaction RH + H2O2 = ROH + H2O.. Its function is as follows. Aromatic peroxidase that oxidizes aryl alcohols into the corresponding aldehydes and then into the corresponding benzoic acids. Oxidizes toluene and naphthalene. Catalyzes the regioselective peroxide-dependent hydroxylation of propranolol and diclofenac to 5-hydroxypropranolol and 4'-hydroxydiclofenac. Catalyzes the regioselective peroxide-dependent hydroxylation of naphthalene to 1-naphthol or 2-naphthol via a naphthalene 1,2-oxide intermediate. Catalyzes the regioselective peroxide-dependent oxidation of pyridine to pyridine N-oxide. Halogenates monochlorodimedone and phenol. Oxidizes the sulfur-containing heterocycle dibenzothiophene to yield ring-hydroxylation products and to a lesser extent sulfoxidation products. This Cyclocybe aegerita (Black poplar mushroom) protein is Aromatic peroxygenase.